Reading from the N-terminus, the 353-residue chain is Cytochrome bc1 complex Rieske iron-sulfur subunit (353 aa).

Residues 1 to 51 are disordered; sequence MSSQDIPEENLPAEQDRPHGAAARPADETNPFADPGLPPHEPRVQDVDERA. Over residues 40–51 the composition is skewed to basic and acidic residues; the sequence is HEPRVQDVDERA. A run of 3 helical transmembrane segments spans residues 60-80, 99-119, and 164-184; these read ALLF…FVAI, FALG…AVHW, and LIRN…VVLL. In terms of domain architecture, Rieske spans 246-336; it reads KAALMIIRLE…IGVNDEGYLE (91 aa). [2Fe-2S] cluster-binding residues include Cys279, His281, Cys298, and His301. Cys284 and Cys300 form a disulfide bridge.

This sequence belongs to the Rieske iron-sulfur protein family. As to quaternary structure, the cytochrome bc1 complex is composed of a cytochrome b (QcrB), the Rieske iron-sulfur protein (QcrA) and a diheme cytochrome c (QcrC) subunit. It depends on [2Fe-2S] cluster as a cofactor.

It is found in the cell membrane. Its function is as follows. Iron-sulfur subunit of the cytochrome bc1 complex, an essential component of the respiratory electron transport chain required for ATP synthesis. The bc1 complex catalyzes the oxidation of menaquinol and the reduction of cytochrome c in the respiratory chain. The bc1 complex operates through a Q-cycle mechanism that couples electron transfer to generation of the proton gradient that drives ATP synthesis. The sequence is that of Cytochrome bc1 complex Rieske iron-sulfur subunit (qcrA) from Streptomyces coelicolor (strain ATCC BAA-471 / A3(2) / M145).